The primary structure comprises 356 residues: MKVQQYRLDELAHLVKGELIGEGSLQFSNLASLENAEVNHLTFVNGEKHLDQAKVSRAGAYIVTAALKEHLPEKDNFIIVDNPYLAFAILTHVFDKKISSTGIESTAQIHPSAVISKTAYIGHYVVIGENCVVGDNTVIQSHTKLDDNVEVGKDCFIDSHVTITGGSKLRDRVRIHSSTVIGGEGFGFAPYQGKWHRIAQLGSVLIGNDVRIGSNCSIDRGALDNTILEDGVIIDNLVQIAHNVHIGSNTAIAAKCGIAGSTKIGKNCILAGACGVAGHLSIADNVTLTGMSMVTKNISEAGTYSSGTGLFENNHWKKTIVRLRQLADVPLTQITKRLDHIQAQIESLESTFNLRK.

His242 acts as the Proton acceptor in catalysis.

The protein belongs to the transferase hexapeptide repeat family. LpxD subfamily. In terms of assembly, homotrimer.

The catalysed reaction is a UDP-3-O-[(3R)-3-hydroxyacyl]-alpha-D-glucosamine + a (3R)-hydroxyacyl-[ACP] = a UDP-2-N,3-O-bis[(3R)-3-hydroxyacyl]-alpha-D-glucosamine + holo-[ACP] + H(+). The protein operates within bacterial outer membrane biogenesis; LPS lipid A biosynthesis. Catalyzes the N-acylation of UDP-3-O-acylglucosamine using 3-hydroxyacyl-ACP as the acyl donor. Is involved in the biosynthesis of lipid A, a phosphorylated glycolipid that anchors the lipopolysaccharide to the outer membrane of the cell. This chain is UDP-3-O-acylglucosamine N-acyltransferase, found in Acinetobacter baumannii (strain ACICU).